Consider the following 168-residue polypeptide: Photosystem I assembly protein Ycf3 (168 aa).

3 TPR repeats span residues 35-68, 72-105, and 120-153; these read AFTY…EIDP, SYIL…NPFL, and GEQA…TPGN.

It belongs to the Ycf3 family.

It is found in the plastid. The protein localises to the chloroplast thylakoid membrane. In terms of biological role, essential for the assembly of the photosystem I (PSI) complex. May act as a chaperone-like factor to guide the assembly of the PSI subunits. The protein is Photosystem I assembly protein Ycf3 of Daucus carota (Wild carrot).